A 122-amino-acid chain; its full sequence is Large ribosomal subunit protein bL12 (122 aa).

The protein belongs to the bacterial ribosomal protein bL12 family. Homodimer. Part of the ribosomal stalk of the 50S ribosomal subunit. Forms a multimeric L10(L12)X complex, where L10 forms an elongated spine to which 2 to 4 L12 dimers bind in a sequential fashion. Binds GTP-bound translation factors.

Its function is as follows. Forms part of the ribosomal stalk which helps the ribosome interact with GTP-bound translation factors. Is thus essential for accurate translation. The polypeptide is Large ribosomal subunit protein bL12 (Flavobacterium psychrophilum (strain ATCC 49511 / DSM 21280 / CIP 103535 / JIP02/86)).